The sequence spans 1160 residues: Large proline-rich protein BAG6 (1160 aa).

The Ubiquitin-like domain occupies 7 to 82; sequence IEVTVKTLDS…HLVERPPPQS (76 aa). Disordered stretches follow at residues 76–114, 206–261, 367–422, 478–547, 563–628, 672–711, 962–1038, and 1126–1160; these read ERPPPQSSQPGGGGGGVSGSSGAADGGSSSSQSSAYTTS, EGQS…HPSP, IPMN…GQGT, ASAG…QTNQ, GDQT…DNLA, SGQPVFPSPNQQPPPSQATPPSAPSGPAPTTAPSGGAETL, SARR…AEPW, and YAQQVKSDIKKRLSDDPDYNHQRFPNTHRVFSEDA. Over residues 85-94 the composition is skewed to gly residues; the sequence is PGGGGGGVSG. 2 stretches are compositionally biased toward low complexity: residues 95 to 110 and 223 to 233; these read SSGAADGGSSSSQSSA and SSSSFSAHPMD. Polar residues-rich tracts occupy residues 247–257 and 371–417; these read QTEGETQSGPN and LGST…QQTG. Composition is skewed to low complexity over residues 478–495 and 566–614; these read ASAGHQGQQQGTAGAGAQ and TSTT…STAS. The segment covering 677-698 has biased composition (pro residues); sequence FPSPNQQPPPSQATPPSAPSGP. The span at 699–708 shows a compositional bias: low complexity; the sequence is APTTAPSGGA. Residues 1132–1146 are compositionally biased toward basic and acidic residues; that stretch reads SDIKKRLSDDPDYNH.

Component of the bag6/bat3 complex.

The protein localises to the cytoplasm. Its subcellular location is the cytosol. It localises to the nucleus. The protein resides in the secreted. It is found in the extracellular exosome. Its function is as follows. ATP-independent molecular chaperone preventing the aggregation of misfolded and hydrophobic patches-containing proteins. Functions as part of a cytosolic protein quality control complex, the bag6/bat3 complex, which maintains these client proteins in a soluble state and participates in their proper delivery to the endoplasmic reticulum or alternatively can promote their sorting to the proteasome where they undergo degradation. The bag6/bat3 complex is involved in the post-translational delivery of tail-anchored/type II transmembrane proteins to the endoplasmic reticulum membrane. Similarly, the bag6/bat3 complex also functions as a sorting platform for proteins of the secretory pathway that are mislocalized to the cytosol either delivering them to the proteasome for degradation or to the endoplasmic reticulum. The bag6/bat3 complex also plays a role in the endoplasmic reticulum-associated degradation (ERAD), a quality control mechanism that eliminates unwanted proteins of the endoplasmic reticulum through their retrotranslocation to the cytosol and their targeting to the proteasome. It maintains these retrotranslocated proteins in an unfolded yet soluble state condition in the cytosol to ensure their proper delivery to the proteasome. Also required for selective ubiquitin-mediated degradation of defective nascent chain polypeptides by the proteasome. Also involved in endoplasmic reticulum stress-induced pre-emptive quality control, a mechanism that selectively attenuates the translocation of newly synthesized proteins into the endoplasmic reticulum and reroutes them to the cytosol for proteasomal degradation. May ensure the proper degradation of these proteins and thereby protects the endoplasmic reticulum from protein overload upon stress. By stabilizing a large spectrum of proteins, may indirectly affect different biological processes including apoptosis. By controlling the steady-state expression of the IGF1R receptor, indirectly regulates the insulin-like growth factor receptor signaling pathway. Functionally, when nuclear, may also act as a component of some chromatin regulator complex. The chain is Large proline-rich protein BAG6 from Danio rerio (Zebrafish).